The following is a 424-amino-acid chain: Dapdiamide A synthase (424 aa).

The 199-residue stretch at 120-318 (QEQLALKGVA…QISKLAQAVL (199 aa)) folds into the ATP-grasp domain. Position 147 to 209 (147 to 209 (AGHAHWPVVL…QEFLAGEEFV (63 aa))) interacts with ATP. Mg(2+)-binding residues include Glu-275 and Glu-287.

Mg(2+) is required as a cofactor. It depends on Mn(2+) as a cofactor.

It catalyses the reaction 3-[[[(2R,3R)-3-carboxyoxiran-2-yl]carbonyl]amino]-L-alanine + L-valine + ATP = dapdiamide E + ADP + phosphate + H(+). The enzyme catalyses N(3)-fumaramoyl-(S)-2,3-diaminopropanoate + L-valine + ATP = dapdiamide A + ADP + phosphate + H(+). It carries out the reaction N(3)-fumaramoyl-(S)-2,3-diaminopropanoate + L-isoleucine + ATP = dapdiamide B + ADP + phosphate + H(+). The catalysed reaction is N(3)-fumaramoyl-(S)-2,3-diaminopropanoate + L-leucine + ATP = dapdiamide C + ADP + phosphate + H(+). It functions in the pathway antibiotic biosynthesis. Functionally, involved in dapdiamide antibiotics biosynthesis. Ligates N-beta-fumaramoyl-DAP and valine, isoleucine or leucine to form dapdiamides A, B or C, respectively. Also ligates N-beta-epoxysuccinamoyl-DAP and valine to form dapdiamide E. The chain is Dapdiamide A synthase from Enterobacter agglomerans (Erwinia herbicola).